A 271-amino-acid chain; its full sequence is Phosphatidylinositol transfer protein beta isoform (271 aa).

At Lys-215 the chain carries N6-acetyllysine. Residue Ser-262 is modified to Phosphoserine.

It belongs to the PtdIns transfer protein family. PI transfer class I subfamily. Constitutive phosphorylation of Ser-262 has no effect on phospholipid transfer activity but is required for Golgi targeting. As to expression, widely expressed in various tissues including brain.

It localises to the golgi apparatus. It is found in the golgi apparatus membrane. The protein resides in the endoplasmic reticulum membrane. It catalyses the reaction a 1,2-diacyl-sn-glycero-3-phosphocholine(in) = a 1,2-diacyl-sn-glycero-3-phosphocholine(out). It carries out the reaction a 1,2-diacyl-sn-glycero-3-phospho-(1D-myo-inositol)(in) = a 1,2-diacyl-sn-glycero-3-phospho-(1D-myo-inositol)(out). The catalysed reaction is an N-(acyl)-sphingosylphosphocholine(in) = an N-(acyl)-sphingosylphosphocholine(out). With respect to regulation, phosphatidylinositol transfer activity is inhibited by N-ethylmaleimide. Catalyzes the transfer of phosphatidylinositol and phosphatidylcholine between membranes. Also catalyzes the transfer of sphingomyelin. Required for COPI-mediated retrograde transport from the Golgi to the endoplasmic reticulum; phosphatidylinositol and phosphatidylcholine transfer activity is essential for this function. The sequence is that of Phosphatidylinositol transfer protein beta isoform (PITPNB) from Homo sapiens (Human).